The following is a 124-amino-acid chain: MFAVIKTGGRQYRVVPDDVLEIGKIAGDVGTIVQLGEVLVLGADTPVLGVPTVAGASVAAEVLDHKRGPKVISFKKRRRKNSKRKRGYRDEITVLRITEILADGNAPSIGPRVRKAKPAAEAAE.

The disordered stretch occupies residues 105–124 (NAPSIGPRVRKAKPAAEAAE).

It belongs to the bacterial ribosomal protein bL21 family. Part of the 50S ribosomal subunit. Contacts protein L20.

Functionally, this protein binds to 23S rRNA in the presence of protein L20. The polypeptide is Large ribosomal subunit protein bL21 (Rhodopseudomonas palustris (strain BisA53)).